We begin with the raw amino-acid sequence, 795 residues long: Protocadherin beta-4 (795 aa).

The first 27 residues, 1–27, serve as a signal peptide directing secretion; it reads MKKLGRIHPNRQVLAFILMVFLSQVRL. The Extracellular portion of the chain corresponds to 28 to 689; that stretch reads EPIRYSVLEE…AQADSLTVYL (662 aa). 5 Cadherin domains span residues 34 to 132, 137 to 241, 246 to 346, 351 to 450, and 455 to 560; these read VLEE…SPIF, VLLK…APEF, YGVQ…PPEL, LTSS…APAF, and YTLF…SPFV. N183 carries an N-linked (GlcNAc...) asparagine glycan. 2 N-linked (GlcNAc...) asparagine glycosylation sites follow: N417 and N435. A glycan (N-linked (GlcNAc...) asparagine) is linked at N566. In terms of domain architecture, Cadherin 6 spans 567 to 670; sequence GSAPCTELVP…LVDGFSQPYL (104 aa). The helical transmembrane segment at 690 to 710 threads the bilayer; that stretch reads VVALASVSSLFLFSVLLFVAV. Residues 711–795 are Cytoplasmic-facing; the sequence is RLCRRSRAAS…PKFRNSLVFS (85 aa).

It localises to the cell membrane. Functionally, potential calcium-dependent cell-adhesion protein. May be involved in the establishment and maintenance of specific neuronal connections in the brain. The sequence is that of Protocadherin beta-4 (PCDHB4) from Homo sapiens (Human).